Consider the following 106-residue polypeptide: UPF0060 membrane protein Csal_2746 (106 aa).

Helical transmembrane passes span 6–26 (LLFI…WLWL), 31–51 (SPWL…LLSL), 59–79 (VYAA…WGVD), and 85–105 (PTDW…ASGW).

The protein belongs to the UPF0060 family.

The protein resides in the cell inner membrane. The chain is UPF0060 membrane protein Csal_2746 from Chromohalobacter salexigens (strain ATCC BAA-138 / DSM 3043 / CIP 106854 / NCIMB 13768 / 1H11).